Here is a 197-residue protein sequence, read N- to C-terminus: Fucoxanthin-chlorophyll a-c binding protein E, chloroplastic (197 aa).

A chloroplast-targeting transit peptide spans methionine 1–methionine 31. The next 3 membrane-spanning stretches (helical) occupy residues isoleucine 73–isoleucine 94, isoleucine 114–methionine 134, and glycine 174–proline 196.

This sequence belongs to the fucoxanthin chlorophyll protein family. As to quaternary structure, the LHC complex of chromophytic algae is composed of fucoxanthin, chlorophyll A and C bound non-covalently by fucoxanthin chlorophyll proteins (FCPs). The ratio of the pigments in LHC; fucoxanthin: chlorophyll C: chlorophyll A; (0.6-1): (0.1-0.3): (1).

Its subcellular location is the plastid. It localises to the chloroplast thylakoid membrane. Functionally, the light-harvesting complex (LHC) functions as a light receptor, it captures and delivers excitation energy to photosystems with which it is closely associated. Energy is transferred from the carotenoid and chlorophyll C (or B) to chlorophyll A and the photosynthetic reaction centers where it is used to synthesize ATP and reducing power. The sequence is that of Fucoxanthin-chlorophyll a-c binding protein E, chloroplastic (FCPE) from Phaeodactylum tricornutum (Diatom).